We begin with the raw amino-acid sequence, 208 residues long: MMTISKALPNFFEYAEHQTSYALRDVILPKDLSLLVKWMHQPHIIPQWQLNKPELELAVYFERMLCDDHQHLYIVQIDGKDVGYLEIYEAKRDRLALYYDAKKDDLGWHVLLSEDAVGQGHFRAVMRMLSFLIFEHSNAEKVVGEPDQTMSVYEKIRADIALEPQGTIQLQEKTAMLYHCYREKFYQQCGHYYKTFKRKKADKCLVEN.

Belongs to the IucB family.

It carries out the reaction N-hydroxyputrescine + acetyl-CoA = N(1)-acetyl-N(1)-hydroxyputrescine + CoA. Its pathway is siderophore biosynthesis. Functionally, N-acetyltransferase involved in the biosynthesis of fimsbactin A, the major siderophore produced by A.baumannii. Catalyzes the acetylation of N-hydroxyputrescine to form N(1)-acetyl-N(1)-hydroxyputrescine (ahPutr). This chain is N-hydroxyputrescine acetyltransferase, found in Acinetobacter baumannii (strain ATCC 17978 / DSM 105126 / CIP 53.77 / LMG 1025 / NCDC KC755 / 5377).